Consider the following 167-residue polypeptide: Inclusion membrane protein G (167 aa).

The next 2 membrane-spanning stretches (helical) occupy residues 37-57 (LSLF…AVLF) and 63-83 (VLPY…AVIV). 2 disordered regions span residues 97-136 (KRSP…STFG) and 148-167 (VSGA…SHSF). Over residues 122–134 (ESASPQASPTSST) the composition is skewed to low complexity. The Phosphorylation-dependent binding motif motif lies at 161–166 (RSRSHS). A Phosphoserine modification is found at serine 166.

In terms of processing, phosphorylated by chlamydial kinase Pnk1.

The protein localises to the secreted. The protein resides in the host vacuole. It is found in the host pathogen-containing vacuole. Its subcellular location is the host pathogen-containing vacuole membrane. In terms of biological role, inclusion membrane protein probably involved in early modification events of the chlamydial inclusion. Binds to the host cell 14-3-3 beta (YWHAB); phosphorylation of Ser-166 is probably required. This Chlamydia trachomatis serovar D (strain ATCC VR-885 / DSM 19411 / UW-3/Cx) protein is Inclusion membrane protein G (incG).